A 506-amino-acid chain; its full sequence is Maturase K (506 aa).

It belongs to the intron maturase 2 family. MatK subfamily.

The protein resides in the plastid. It localises to the chloroplast. In terms of biological role, usually encoded in the trnK tRNA gene intron. Probably assists in splicing its own and other chloroplast group II introns. This chain is Maturase K, found in Angiopteris evecta (Mule's foot fern).